Consider the following 468-residue polypeptide: ATP synthase subunit beta (468 aa).

155–162 (GGAGVGKT) is an ATP binding site.

The protein belongs to the ATPase alpha/beta chains family. In terms of assembly, F-type ATPases have 2 components, CF(1) - the catalytic core - and CF(0) - the membrane proton channel. CF(1) has five subunits: alpha(3), beta(3), gamma(1), delta(1), epsilon(1). CF(0) has three main subunits: a(1), b(2) and c(9-12). The alpha and beta chains form an alternating ring which encloses part of the gamma chain. CF(1) is attached to CF(0) by a central stalk formed by the gamma and epsilon chains, while a peripheral stalk is formed by the delta and b chains.

The protein resides in the cell membrane. The catalysed reaction is ATP + H2O + 4 H(+)(in) = ADP + phosphate + 5 H(+)(out). Functionally, produces ATP from ADP in the presence of a proton gradient across the membrane. The catalytic sites are hosted primarily by the beta subunits. This Streptococcus pyogenes serotype M5 (strain Manfredo) protein is ATP synthase subunit beta.